The sequence spans 252 residues: tRNA (guanine-N(1)-)-methyltransferase (252 aa).

Residues Gly116 and 135 to 140 each bind S-adenosyl-L-methionine; that span reads LGDYVL.

Belongs to the RNA methyltransferase TrmD family. In terms of assembly, homodimer.

The protein resides in the cytoplasm. It carries out the reaction guanosine(37) in tRNA + S-adenosyl-L-methionine = N(1)-methylguanosine(37) in tRNA + S-adenosyl-L-homocysteine + H(+). Specifically methylates guanosine-37 in various tRNAs. This is tRNA (guanine-N(1)-)-methyltransferase from Limosilactobacillus reuteri (strain DSM 20016) (Lactobacillus reuteri).